The following is a 193-amino-acid chain: Holliday junction branch migration complex subunit RuvA (193 aa).

Positions methionine 1 to glycine 64 are domain I. Positions threonine 65–methionine 139 are domain II. A flexible linker region spans residues methionine 139–alanine 143. The tract at residues serine 144 to glycine 193 is domain III.

It belongs to the RuvA family. As to quaternary structure, homotetramer. Forms an RuvA(8)-RuvB(12)-Holliday junction (HJ) complex. HJ DNA is sandwiched between 2 RuvA tetramers; dsDNA enters through RuvA and exits via RuvB. An RuvB hexamer assembles on each DNA strand where it exits the tetramer. Each RuvB hexamer is contacted by two RuvA subunits (via domain III) on 2 adjacent RuvB subunits; this complex drives branch migration. In the full resolvosome a probable DNA-RuvA(4)-RuvB(12)-RuvC(2) complex forms which resolves the HJ.

It is found in the cytoplasm. In terms of biological role, the RuvA-RuvB-RuvC complex processes Holliday junction (HJ) DNA during genetic recombination and DNA repair, while the RuvA-RuvB complex plays an important role in the rescue of blocked DNA replication forks via replication fork reversal (RFR). RuvA specifically binds to HJ cruciform DNA, conferring on it an open structure. The RuvB hexamer acts as an ATP-dependent pump, pulling dsDNA into and through the RuvAB complex. HJ branch migration allows RuvC to scan DNA until it finds its consensus sequence, where it cleaves and resolves the cruciform DNA. The chain is Holliday junction branch migration complex subunit RuvA from Paraburkholderia phytofirmans (strain DSM 17436 / LMG 22146 / PsJN) (Burkholderia phytofirmans).